Here is a 325-residue protein sequence, read N- to C-terminus: Germination protease (325 aa).

Positions methionine 1 to aspartate 7 are excised as a propeptide.

The protein belongs to the peptidase A25 family. In terms of assembly, homotetramer. In terms of processing, autoproteolytically processed. The inactive tetrameric zymogen termed p46 autoprocesses to a smaller form termed p41, which is active only during spore germination.

It catalyses the reaction Endopeptidase action with P4 Glu or Asp, P1 preferably Glu &gt; Asp, P1' hydrophobic and P2' Ala.. Initiates the rapid degradation of small, acid-soluble proteins during spore germination. This chain is Germination protease, found in Clostridium perfringens (strain ATCC 13124 / DSM 756 / JCM 1290 / NCIMB 6125 / NCTC 8237 / Type A).